A 377-amino-acid chain; its full sequence is Nitric oxide reductase FlRd-NAD(+) reductase (377 aa).

The protein belongs to the FAD-dependent oxidoreductase family. FAD serves as cofactor.

The protein resides in the cytoplasm. It carries out the reaction 2 reduced [nitric oxide reductase rubredoxin domain] + NAD(+) + H(+) = 2 oxidized [nitric oxide reductase rubredoxin domain] + NADH. The protein operates within nitrogen metabolism; nitric oxide reduction. Its function is as follows. One of at least two accessory proteins for anaerobic nitric oxide (NO) reductase. Reduces the rubredoxin moiety of NO reductase. The sequence is that of Nitric oxide reductase FlRd-NAD(+) reductase from Salmonella newport (strain SL254).